The sequence spans 161 residues: 6,7-dimethyl-8-ribityllumazine synthase (161 aa).

5-amino-6-(D-ribitylamino)uracil-binding positions include W25, 57 to 59 (AFE), and 80 to 82 (VVI). 85–86 (GT) provides a ligand contact to (2S)-2-hydroxy-3-oxobutyl phosphate. H88 serves as the catalytic Proton donor. Position 113 (F113) interacts with 5-amino-6-(D-ribitylamino)uracil. R127 contributes to the (2S)-2-hydroxy-3-oxobutyl phosphate binding site.

It belongs to the DMRL synthase family.

The catalysed reaction is (2S)-2-hydroxy-3-oxobutyl phosphate + 5-amino-6-(D-ribitylamino)uracil = 6,7-dimethyl-8-(1-D-ribityl)lumazine + phosphate + 2 H2O + H(+). Its pathway is cofactor biosynthesis; riboflavin biosynthesis; riboflavin from 2-hydroxy-3-oxobutyl phosphate and 5-amino-6-(D-ribitylamino)uracil: step 1/2. Catalyzes the formation of 6,7-dimethyl-8-ribityllumazine by condensation of 5-amino-6-(D-ribitylamino)uracil with 3,4-dihydroxy-2-butanone 4-phosphate. This is the penultimate step in the biosynthesis of riboflavin. The chain is 6,7-dimethyl-8-ribityllumazine synthase from Kineococcus radiotolerans (strain ATCC BAA-149 / DSM 14245 / SRS30216).